The primary structure comprises 429 residues: Bifunctional protein GlmU (429 aa).

The segment at 1 to 223 (MKTSILILAA…EDEFMGINDK (223 aa)) is pyrophosphorylase. UDP-N-acetyl-alpha-D-glucosamine contacts are provided by residues 8–11 (LAAG), lysine 22, glutamine 74, and 81–82 (GT). Aspartate 102 provides a ligand contact to Mg(2+). Residues glycine 135, glutamate 149, asparagine 164, and asparagine 221 each coordinate UDP-N-acetyl-alpha-D-glucosamine. Asparagine 221 contributes to the Mg(2+) binding site. A linker region spans residues 224–244 (FELSIAENFMQEKIKKYWMQQ). The N-acetyltransferase stretch occupies residues 245–429 (GVIFHLPQST…KNYYYKKFQK (185 aa)). The UDP-N-acetyl-alpha-D-glucosamine site is built by arginine 308 and lysine 325. The Proton acceptor role is filled by histidine 336. The UDP-N-acetyl-alpha-D-glucosamine site is built by tyrosine 339 and asparagine 350. Acetyl-CoA contacts are provided by residues 359–360 (NY), serine 378, alanine 396, and arginine 413.

In the N-terminal section; belongs to the N-acetylglucosamine-1-phosphate uridyltransferase family. It in the C-terminal section; belongs to the transferase hexapeptide repeat family. As to quaternary structure, homotrimer. Requires Mg(2+) as cofactor.

It is found in the cytoplasm. It carries out the reaction alpha-D-glucosamine 1-phosphate + acetyl-CoA = N-acetyl-alpha-D-glucosamine 1-phosphate + CoA + H(+). The enzyme catalyses N-acetyl-alpha-D-glucosamine 1-phosphate + UTP + H(+) = UDP-N-acetyl-alpha-D-glucosamine + diphosphate. It participates in nucleotide-sugar biosynthesis; UDP-N-acetyl-alpha-D-glucosamine biosynthesis; N-acetyl-alpha-D-glucosamine 1-phosphate from alpha-D-glucosamine 6-phosphate (route II): step 2/2. Its pathway is nucleotide-sugar biosynthesis; UDP-N-acetyl-alpha-D-glucosamine biosynthesis; UDP-N-acetyl-alpha-D-glucosamine from N-acetyl-alpha-D-glucosamine 1-phosphate: step 1/1. The protein operates within bacterial outer membrane biogenesis; LPS lipid A biosynthesis. Catalyzes the last two sequential reactions in the de novo biosynthetic pathway for UDP-N-acetylglucosamine (UDP-GlcNAc). The C-terminal domain catalyzes the transfer of acetyl group from acetyl coenzyme A to glucosamine-1-phosphate (GlcN-1-P) to produce N-acetylglucosamine-1-phosphate (GlcNAc-1-P), which is converted into UDP-GlcNAc by the transfer of uridine 5-monophosphate (from uridine 5-triphosphate), a reaction catalyzed by the N-terminal domain. This is Bifunctional protein GlmU from Campylobacter jejuni subsp. doylei (strain ATCC BAA-1458 / RM4099 / 269.97).